The sequence spans 382 residues: Intermediate transcription factor 3 large subunit (382 aa).

The protein belongs to the orthopoxvirus OPG150 family. As to quaternary structure, heterodimerizes with protein A8 to form the virus intermediate transcription factor (VITF)-3.

In terms of biological role, acts with RNA polymerase to initiate transcription from intermediate gene promoters. This chain is Intermediate transcription factor 3 large subunit (OPG150), found in Cynomys gunnisoni (Gunnison's prairie dog).